We begin with the raw amino-acid sequence, 652 residues long: MSTAPSLSALRSSKHSGGGGGGGGGGGSGGGSADPAWTSALSGNCSGHGPGSSPAGSTKPFVHAVPPSDPLRQANRLPIKVLKMLTARTGHILHPEYLQPLPSTPVSPIELDAKKSPLALLAQTCSQIGKPDPSPSSKLSSVASNGGGAGGAGNGAGGDKDAKSGPLKLSDIGVEDKSSFKPYSKPGSDKKEPGGGGGGGGGGGGGGGVAAEKSGFRVPSATCQPFTPRTGSPSSSASACSPGGMLPSAGGGPEGKDDKKDPEAGGGGSSKGSGGASADGVPAGLGHGRISCGGGINVDVNQHSEGGPGGKALGSDCGGSSSSSSGSGPSAPTSSSVLGSGLVAPVSPYKPGQTVFPLPPAGMTYPGSLAGAYAGYPPQFLPHGVALDPTKPGSLVGAQLAAAAAGSLGCSKPAGSSPLAGASPPSVMTASLCRDPYCLSYHCASHLAGAAAASASCAHDPAAAAAALKSGYPLVYPTHPLHGVHSSLTAAAAAGATPPSLAGHPLYPYGFMLPNDPLPHICNWVSANGPCDKRFATSEELLSHLRTHTAFPGTDKLLSGYPSSSSLASAAAAAMACHMHIPTSGAPGSPGTLALRSPHHALGLSSRYHPYSKSPLPTPGAPVPVPAATGPYYSPYALYGQRLTTASALGYQ.

Positions Met1 to Arg11 are enriched in polar residues. The interval Met1–Arg72 is disordered. Over residues Ser16 to Ser32 the composition is skewed to gly residues. Phosphoserine is present on Ser107. 2 disordered regions span residues Ser126 to Ala283 and Ile296 to Leu338. Over residues Pro135–Ser144 the composition is skewed to low complexity. 2 stretches are compositionally biased toward gly residues: residues Asn145–Gly157 and Gly194–Val209. The residue at position 213 (Lys213) is an N6-acetyllysine. Residues Ala221 to Thr230 are compositionally biased toward polar residues. Residues Gly231–Gly244 show a composition bias toward low complexity. Phosphoserine is present on residues Ser235 and Ser241. A compositionally biased stretch (basic and acidic residues) spans Glu254–Glu263. The segment covering Ala264–Ala283 has biased composition (gly residues). Positions Gly314–Ser336 are enriched in low complexity. The segment at His520–His548 adopts a C2H2-type zinc-finger fold. The residue at position 642 (Arg642) is an Omega-N-methylarginine.

Belongs to the Elbow/Noc family.

Its subcellular location is the nucleus. In terms of biological role, may function as a transcriptional repressor. The chain is Zinc finger protein 503 (Znf503) from Mus musculus (Mouse).